The chain runs to 618 residues: 1-aminocyclopropane-1-carboxylate synthase-like protein 1 (618 aa).

The span at 11–26 (QGTQTPAAQTTCAPST) shows a compositional bias: low complexity. The disordered stretch occupies residues 11-54 (QGTQTPAAQTTCAPSTMSSSSRPPLETLQAQSVSADETPGSALP). The span at 27-45 (MSSSSRPPLETLQAQSVSA) shows a compositional bias: polar residues. Glu-122 is a binding site for substrate. Lys-340 carries the post-translational modification N6-(pyridoxal phosphate)lysine.

This sequence belongs to the class-I pyridoxal-phosphate-dependent aminotransferase family.

This is 1-aminocyclopropane-1-carboxylate synthase-like protein 1 (accs) from Takifugu rubripes (Japanese pufferfish).